A 137-amino-acid polypeptide reads, in one-letter code: uncharacterized protein (137 aa).

A run of 4 helical transmembrane segments spans residues 14-34 (AVVVAILLYIFIILVVDGSIS), 48-68 (YHIIEFYDFIHIIGFLLSLSI), 84-104 (FFTIFFGITFILGITLFLGLT), and 109-129 (HIPSMRGYTTLMLFFFLLNLF).

It is found in the cell membrane. This is an uncharacterized protein from Methanocaldococcus jannaschii (strain ATCC 43067 / DSM 2661 / JAL-1 / JCM 10045 / NBRC 100440) (Methanococcus jannaschii).